The chain runs to 720 residues: Beta-glucan synthesis-associated protein KRE6 (720 aa).

3 stretches are compositionally biased toward polar residues: residues 1–17 (MPLR…STNL), 31–51 (LSSS…NAGL), and 69–90 (SLSS…HDNS). The segment at 1–90 (MPLRNLTETH…SDSSLLHDNS (90 aa)) is disordered. The Cytoplasmic portion of the chain corresponds to 1–252 (MPLRNLTETH…KYMDKRSASG (252 aa)). Residues Ser81, Ser116, Ser133, Ser134, Ser136, and Ser139 each carry the phosphoserine modification. 2 disordered regions span residues 117–142 (TAND…SNLS) and 167–189 (QLNH…SFSS). The segment covering 133–142 (SSPSLNSNLS) has biased composition (low complexity). A helical; Signal-anchor for type II membrane protein transmembrane segment spans residues 253–273 (LAGVLLLFLAAIFIFIVLPAL). Topologically, residues 274 to 720 (TFTGAIDHES…CTSSKFKLSS (447 aa)) are lumenal. The GH16 domain occupies 289–664 (TYLTQYQYPQ…YVRIYQPSNA (376 aa)). 5 N-linked (GlcNAc...) asparagine glycosylation sites follow: Asn374, Asn461, Asn538, Asn563, and Asn691.

This sequence belongs to the SKN1/KRE6 family. The cytoplasmic domain interacts with the actin patch assembly proteins LAS17 and SLA1. Interacts with KEG1.

The protein localises to the golgi apparatus membrane. Functionally, involved in the synthesis of (1-&gt;6)- and (1-&gt;3)-beta-D-glucan polymers of the yeast cell wall in vivo. It is required for full activity of beta-glucan synthase in vitro. May be involved in the maturation and transport of cell wall proteins (CWP) to the cell wall. May act as a transglucosidase and contribute to the construction of a protein-bound glucan-structure that acts as an acceptor site for the addition of (1-&gt;6)-beta-D-glucan at the cell surface. The protein is Beta-glucan synthesis-associated protein KRE6 (KRE6) of Saccharomyces cerevisiae (strain ATCC 204508 / S288c) (Baker's yeast).